The primary structure comprises 958 residues: MKIADLSPTNEFIPRHIGPTDSDIHEMLKTLGFNSLDQMADKVIPAQIRTTHAYADVGNGISEHGLLNHLKQMVSKNKVYKNYIGMGYHDTITPTVIQRNIFENPVWYTAYTPYQPEISQGRLEALLNFQTMIADLNGMEIANASLLDEGTAAAEAMFMAHSLCKNKANAFVVSPDMHPHVIEVIGTRAEPLGFEMIVMDPAKYDFAKPVFGVFFQYPNTNGTVEDYAAIAKKYKDHGALVTASTDLLAMTLLTPPGEWGADMVVGNSQRFGVPLGFGGPHAGFLATKDAFKRLMPGRLVGVSVDSQGKSALRLALQTREQHIRREKATSNICTAQVLLANMASMYAVYHGPAGLKKIALRVQRLTAILSAGLKKLNLEVGAGHVFDTVTVKTDKAAEIIAQAEKMQMNFRNYGGGKLGVSLNEATTLEDVEQIWAAFNLGKAAGFTALSVDESLADVTLPANLTRSTAYMTHQVFNSHHSETEMLRYIHHLQNKDLTLTHSMIPLGSCTMKLNATTELVPVSWPEISKLHPFAPTAQAVGLIEMIHDLEKKLCDITGFAAVSLQPNAGSQGEYAGLLVIRKYHQSRGQGHRNICLIPSSAHGTNPASAALVNMQVVVVACDDQGNVDVADLKAKAEQHKDNLAALMITYPSTHGVFEEGIVEICKIIHDNGGQVYMDGANMNALVGMCRPGVFGPDVSHMNLHKTFSIPHGGGGPGVGPIGVGAHLAEFLPKHSLVPEAGPANGISATTSAPWGSASILPISWAYITMMGAQGLRKATLVSILSANYIAKKLEAHYPVLYKGKNGLVAHECIVDVREIKKTSGIDVTDVAKRLMDFGFHAPTMSFPVAGTLMIEPTESESKKELDRFIESMVTIRKEIAAVETGKMDKENNALKNAPHTAQMLMKPEWNHPYSREEAVYPVEWLRGNKFWPVVGRVDNAYGDRNLICSCPSIEDYQA.

Lys705 is subject to N6-(pyridoxal phosphate)lysine.

It belongs to the GcvP family. As to quaternary structure, the glycine cleavage system is composed of four proteins: P, T, L and H. Requires pyridoxal 5'-phosphate as cofactor.

The enzyme catalyses N(6)-[(R)-lipoyl]-L-lysyl-[glycine-cleavage complex H protein] + glycine + H(+) = N(6)-[(R)-S(8)-aminomethyldihydrolipoyl]-L-lysyl-[glycine-cleavage complex H protein] + CO2. Its function is as follows. The glycine cleavage system catalyzes the degradation of glycine. The P protein binds the alpha-amino group of glycine through its pyridoxal phosphate cofactor; CO(2) is released and the remaining methylamine moiety is then transferred to the lipoamide cofactor of the H protein. This Bdellovibrio bacteriovorus (strain ATCC 15356 / DSM 50701 / NCIMB 9529 / HD100) protein is Glycine dehydrogenase (decarboxylating).